We begin with the raw amino-acid sequence, 231 residues long: Large ribosomal subunit protein uL1 (231 aa).

Belongs to the universal ribosomal protein uL1 family. As to quaternary structure, part of the 50S ribosomal subunit.

In terms of biological role, binds directly to 23S rRNA. The L1 stalk is quite mobile in the ribosome, and is involved in E site tRNA release. Protein L1 is also a translational repressor protein, it controls the translation of the L11 operon by binding to its mRNA. The protein is Large ribosomal subunit protein uL1 of Dechloromonas aromatica (strain RCB).